Here is a 102-residue protein sequence, read N- to C-terminus: NADH-quinone oxidoreductase subunit K 1 (102 aa).

3 helical membrane-spanning segments follow: residues 5 to 25, 30 to 50, and 62 to 82; these read LLHV…CVLV, IIMM…AFVG, and VFAL…LALV.

This sequence belongs to the complex I subunit 4L family. NDH-1 is composed of 14 different subunits. Subunits NuoA, H, J, K, L, M, N constitute the membrane sector of the complex.

It localises to the cell inner membrane. The catalysed reaction is a quinone + NADH + 5 H(+)(in) = a quinol + NAD(+) + 4 H(+)(out). NDH-1 shuttles electrons from NADH, via FMN and iron-sulfur (Fe-S) centers, to quinones in the respiratory chain. The immediate electron acceptor for the enzyme in this species is believed to be ubiquinone. Couples the redox reaction to proton translocation (for every two electrons transferred, four hydrogen ions are translocated across the cytoplasmic membrane), and thus conserves the redox energy in a proton gradient. The protein is NADH-quinone oxidoreductase subunit K 1 of Geotalea uraniireducens (strain Rf4) (Geobacter uraniireducens).